A 342-amino-acid chain; its full sequence is Autoinducer 2 import system permease protein LsrC (342 aa).

At 1-13 the chain is on the periplasmic side; that stretch reads MLKFIQNNREITA. A helical membrane pass occupies residues 14–34; the sequence is LLAVLLLFVLPGFLDRQYLSV. Residues 35-38 are Cytoplasmic-facing; the sequence is QTLT. A helical membrane pass occupies residues 39 to 59; it reads MVYSSAQILILLAMGATLVML. The Periplasmic portion of the chain corresponds to 60–69; it reads TRNIDVSVGS. A helical membrane pass occupies residues 70-90; it reads ITGMCAVLLGMLLNAGYSLPV. The Cytoplasmic portion of the chain corresponds to 91–92; the sequence is AC. Residues 93 to 113 form a helical membrane-spanning segment; the sequence is VATLLLGLLAGFFNGVLVAWL. Residue lysine 114 is a topological domain, periplasmic. A helical transmembrane segment spans residues 115–135; the sequence is IPAIVATLGTLGLYRGIMLLW. Residues 136–154 are Cytoplasmic-facing; the sequence is TGGKWIEGLPAELKQLSAP. The chain crosses the membrane as a helical span at residues 155–175; it reads LLLGVSAIGWLTIILVAFMAW. The Periplasmic segment spans residues 176–212; the sequence is LLAKTAFGRSFYATGDNLQGARQLGVRTEAIRIVAFS. Residues 213–233 traverse the membrane as a helical segment; it reads LNGCMAALAGIVFASQIGFIP. Residues 234–251 lie on the Cytoplasmic side of the membrane; that stretch reads NQTGTGLEMKAIAACVLG. The chain crosses the membrane as a helical span at residues 252-272; that stretch reads GISLLGGSGAIIGAVLGAWFL. Residues 273 to 283 are Periplasmic-facing; that stretch reads TQIDSVLVLLR. The chain crosses the membrane as a helical span at residues 284-304; sequence IPAWWNDFIAGLVLLAVLVFD. The Cytoplasmic segment spans residues 305–342; sequence GRLRCALELNLRRQKYARFMTPPPSVKPASSGKKREAA.

Belongs to the binding-protein-dependent transport system permease family. AraH/RbsC subfamily. In terms of assembly, the complex is composed of two ATP-binding proteins (LsrA), two transmembrane proteins (LsrC and LsrD) and a solute-binding protein (LsrB).

The protein resides in the cell inner membrane. Functionally, part of the ABC transporter complex LsrABCD involved in autoinducer 2 (AI-2) import. Probably responsible for the translocation of the substrate across the membrane. This chain is Autoinducer 2 import system permease protein LsrC (lsrC), found in Escherichia coli O157:H7.